The following is a 502-amino-acid chain: ATP synthase subunit alpha (502 aa).

169-176 provides a ligand contact to ATP; sequence GDRQTGKT.

The protein belongs to the ATPase alpha/beta chains family. F-type ATPases have 2 components, CF(1) - the catalytic core - and CF(0) - the membrane proton channel. CF(1) has five subunits: alpha(3), beta(3), gamma(1), delta(1), epsilon(1). CF(0) has three main subunits: a(1), b(2) and c(9-12). The alpha and beta chains form an alternating ring which encloses part of the gamma chain. CF(1) is attached to CF(0) by a central stalk formed by the gamma and epsilon chains, while a peripheral stalk is formed by the delta and b chains.

The protein localises to the cell membrane. The enzyme catalyses ATP + H2O + 4 H(+)(in) = ADP + phosphate + 5 H(+)(out). Its function is as follows. Produces ATP from ADP in the presence of a proton gradient across the membrane. The alpha chain is a regulatory subunit. The polypeptide is ATP synthase subunit alpha (Exiguobacterium sibiricum (strain DSM 17290 / CCUG 55495 / CIP 109462 / JCM 13490 / 255-15)).